The chain runs to 260 residues: Acetylglutamate kinase (260 aa).

Residues 46-47 (GG), R68, and N160 contribute to the substrate site.

Belongs to the acetylglutamate kinase family. ArgB subfamily.

It localises to the cytoplasm. The enzyme catalyses N-acetyl-L-glutamate + ATP = N-acetyl-L-glutamyl 5-phosphate + ADP. It participates in amino-acid biosynthesis; L-arginine biosynthesis; N(2)-acetyl-L-ornithine from L-glutamate: step 2/4. Functionally, catalyzes the ATP-dependent phosphorylation of N-acetyl-L-glutamate. The sequence is that of Acetylglutamate kinase from Shewanella sp. (strain ANA-3).